The following is a 180-amino-acid chain: Large ribosomal subunit protein uL5 (180 aa).

The protein belongs to the universal ribosomal protein uL5 family. In terms of assembly, part of the 50S ribosomal subunit; part of the 5S rRNA/L5/L18/L25 subcomplex. Contacts the 5S rRNA and the P site tRNA. Forms a bridge to the 30S subunit in the 70S ribosome.

Its function is as follows. This is one of the proteins that bind and probably mediate the attachment of the 5S RNA into the large ribosomal subunit, where it forms part of the central protuberance. In the 70S ribosome it contacts protein S13 of the 30S subunit (bridge B1b), connecting the 2 subunits; this bridge is implicated in subunit movement. Contacts the P site tRNA; the 5S rRNA and some of its associated proteins might help stabilize positioning of ribosome-bound tRNAs. This Moorella thermoacetica (strain ATCC 39073 / JCM 9320) protein is Large ribosomal subunit protein uL5.